The chain runs to 430 residues: Transcription factor PIF4 (430 aa).

Disordered regions lie at residues 42-71, 97-136, 160-183, 223-266, and 405-430; these read QTHREQTQTQKQDHHEEALRSSTFLEDQET, MDPLQRPTSETVKPKSSPEPPQVMVKPKACPDPPPQVMPP, TVGPSHCGSNPSQNDLDVSMSHDR, DRKR…NLSE, and SSPAGQQSQQPSSVPTKTTDGSRLDH. Residues 43–60 show a composition bias toward basic and acidic residues; it reads THREQTQTQKQDHHEEAL. Positions 61–71 are enriched in polar residues; it reads RSSTFLEDQET. Residues 126–136 show a composition bias toward pro residues; sequence CPDPPPQVMPP. The segment covering 160–175 has biased composition (polar residues); the sequence is TVGPSHCGSNPSQNDL. Over residues 244 to 253 the composition is skewed to low complexity; sequence NKSNQRSGSN. Residues 257 to 266 show a composition bias toward basic and acidic residues; that stretch reads RAAEVHNLSE. The bHLH domain occupies 257-306; that stretch reads RAAEVHNLSERRRRDRINERMKALQELIPHCSKTDKASILDEAIDYLKSL. Over residues 405-419 the composition is skewed to low complexity; that stretch reads SSPAGQQSQQPSSVP.

The protein belongs to the bHLH protein family. Interacts preferentially with the Pfr form of phytochrome B (phyB). Binds DNA as a homodimer, but once bound to DNA, loses its capacity to interact with phyB. Interacts with APRR1/TOC1 and PIF3. Binds to RGL2 and RGA. Forms non-functional heterodimer with HFR1. Interacts with PHYB, CRY1 and CRY2 in the nucleus in response to low blue light (LBL). Interacts with FYPP1 and FYPP3. Associates to PTAC12/HMR/PAP5, which acts as a transcriptional coactivator to trigger the thermoresponsive growth-relevant genes and promote warm-temperature-dependent PIF4 accumulation. Interacts with MED14. Mainly expressed in leaves, stems and seedlings, and, to a lower extent, in fruits, flowers and roots.

The protein resides in the nucleus. In terms of biological role, transcription factor acting negatively in the phytochrome B signaling pathway. May regulate the expression of a subset of genes involved in cell expansion by binding to the G-box motif. Activated by CRY1 and CRY2 in response to low blue light (LBL) by direct binding at chromatin on E-box variant 5'-CA[CT]GTG-3' to stimulate specific gene expression to adapt global physiology (e.g. hypocotyl elongation in low blue light). Element of a PIF4/HMR/MED14-dependent thermoresponsive process; collaboratively with its transcriptional coactivator PTAC12/HMR/PAP5, involved in the regulation of thermoresponsive growth-relevant genes (e.g. mainly involved in biosynthesis and signaling of the phytohormone auxin) leading to daytime warm temperature elicitation of MED14-dependent thermomorphogenesis (e.g. hypocotyl elongation). The protein is Transcription factor PIF4 of Arabidopsis thaliana (Mouse-ear cress).